A 205-amino-acid chain; its full sequence is Large ribosomal subunit protein uL4 (205 aa).

The interval 44–79 (RAGTKAQKTRREVSGGGAKPWRQKGTGRARAGSSRS) is disordered.

Belongs to the universal ribosomal protein uL4 family. Part of the 50S ribosomal subunit.

In terms of biological role, one of the primary rRNA binding proteins, this protein initially binds near the 5'-end of the 23S rRNA. It is important during the early stages of 50S assembly. It makes multiple contacts with different domains of the 23S rRNA in the assembled 50S subunit and ribosome. Its function is as follows. Forms part of the polypeptide exit tunnel. The chain is Large ribosomal subunit protein uL4 from Coxiella burnetii (strain RSA 331 / Henzerling II).